A 299-amino-acid polypeptide reads, in one-letter code: tRNA dimethylallyltransferase (299 aa).

10-17 (GPTAVGKT) is an ATP binding site. 12-17 (TAVGKT) provides a ligand contact to substrate. Residues 35–38 (DSQQ) form an interaction with substrate tRNA region.

This sequence belongs to the IPP transferase family. Monomer. Mg(2+) is required as a cofactor.

The enzyme catalyses adenosine(37) in tRNA + dimethylallyl diphosphate = N(6)-dimethylallyladenosine(37) in tRNA + diphosphate. Its function is as follows. Catalyzes the transfer of a dimethylallyl group onto the adenine at position 37 in tRNAs that read codons beginning with uridine, leading to the formation of N6-(dimethylallyl)adenosine (i(6)A). The protein is tRNA dimethylallyltransferase of Streptococcus thermophilus (strain CNRZ 1066).